The sequence spans 2776 residues: A-kinase anchor protein 13 (2776 aa).

Disordered stretches follow at residues 371–401, 452–518, 547–584, 618–641, 653–689, 760–871, 910–951, 995–1029, 1431–1508, 1527–1546, and 1565–1603; these read KNKD…SCLQ, EPDA…TETT, PAEA…QSSP, TMPG…PAQS, EAGT…ESTM, VSQT…SPTA, ALGQ…IPGL, GAAK…LPSG, LCDT…MDSI, PFRR…AEMN, and RRSF…FGGE. Polar residues predominate over residues 389-401; it reads DSGSASHQDSCLQ. Residues 493–515 are important for interaction with PRKAR2A; that stretch reads QNNKPQVGEGTKERLENSDSSTT. Basic and acidic residues predominate over residues 560 to 573; it reads PTEKPGMETQERGC. Residues 659–672 are compositionally biased toward polar residues; sequence AEATHQPSTVTSSG. Over residues 773–788 the composition is skewed to low complexity; that stretch reads SPPASSFSLASSPESE. A Phosphoserine modification is found at Ser784. Thr809 is modified (phosphothreonine). Basic and acidic residues-rich tracts occupy residues 820 to 834 and 914 to 940; these read DGPD…DKVG and DGKD…EDQR. Residue Thr941 is modified to Phosphothreonine. Polar residues predominate over residues 1005–1020; sequence TSLSADSKQKASSTEQ. The segment covering 1433-1444 has biased composition (low complexity); that stretch reads DTTGSSSSTDDT. The span at 1454–1476 shows a compositional bias: polar residues; sequence GSDVSLPQTSKLNRSRNHQSANG. Ser1455, Ser1473, Ser1507, Ser1532, and Ser1569 each carry phosphoserine. Positions 1552 to 1678 are important for interaction with MAP2K3; that stretch reads RALGHVVRRP…SRPFHSTSAN (127 aa). Over residues 1583–1594 the composition is skewed to low complexity; sequence SSSLEMSSANSS. Residues Ser1608, Ser1611, and Ser1613 each carry the phosphoserine modification. Residue Lys1637 is modified to N6-methyllysine. A disordered region spans residues 1711–1756; that stretch reads TFSYIRNKMSSSKKSKEKEKEKDKIKEKEKDSKEKEKDKKTLNGHT. Residues 1724-1751 show a composition bias toward basic and acidic residues; the sequence is KSKEKEKEKDKIKEKEKDSKEKEKDKKT. The Phorbol-ester/DAG-type zinc-finger motif lies at 1754–1801; that stretch reads GHTFSPIPIVGPISCSQCMKPFTNKDAYTCAGCGAFVHKGCRENLASC. Ser1839, Ser1858, and Ser1892 each carry phosphoserine. Positions 1882–2776 are interaction with ESR1; the sequence is MSNTWKFLSH…VPAEGEEIFC (895 aa). Thr1893 carries the phosphothreonine modification. A phosphoserine mark is found at Ser1895 and Ser1908. The DH domain maps to 1957-2154; the sequence is KRQEVIYELM…KDVIGAVDSK (198 aa). One can recognise a PH domain in the interval 2194-2296; that stretch reads KLVRDGSVFL…WIQIIQDTIN (103 aa). Residues Ser2308 and Ser2361 each carry the phosphoserine modification. Positions 2308–2345 form a coiled coil; it reads SENEEEKKLLDTKARELKEQLQQKDQQILLLLEEKEMI. A Phosphothreonine modification is found at Thr2431. Residues 2436–2471 are disordered; the sequence is DCHQMNASKGGEKEEGDDGQDLRRTESDSGLKKGGN. A compositionally biased stretch (basic and acidic residues) spans 2455 to 2466; sequence QDLRRTESDSGL. 2 positions are modified to phosphoserine: Ser2527 and Ser2530. Positions 2532-2646 form a coiled coil; that stretch reads LIEQEKQRSL…ERLSQRQMDQ (115 aa). Disordered stretches follow at residues 2549 to 2605 and 2626 to 2776; these read ANLQ…EELQ and EREQ…EIFC. Basic and acidic residues-rich tracts occupy residues 2558–2605 and 2626–2640; these read HLEE…EELQ and EREQ…ERLS. Polar residues-rich tracts occupy residues 2641 to 2653, 2665 to 2700, and 2713 to 2727; these read QRQM…QVSN, LPNS…SISR, and SASQ…SQAP. Residues Ser2673 and Ser2692 each carry the phosphoserine modification.

In terms of assembly, interacts with the cAMP-dependent protein kinase (PKA) holoenzyme and with the regulatory subunit PRKAR2A. Interacts with RHOA. Also interacts with RHOB and RHOC. Identified in a ternary complex with RHOA and PRKAR2A. Identified in a complex with NR3C1 and RHOA. Interacts with BRAF and KSR1. Identified in a complex with BRAF and KSR1. Component of a signaling complex containing at least AKAP13, PKN1, MAPK14, ZAK and MAP2K3. Within this complex, AKAP13 interacts directly with PKN1, which in turn recruits MAPK14, MAP2K3 and ZAK. Interacts (phosphorylated form) with YWHAB and YWHAZ. Interaction with YWHAB inhibits activation of RHOA, interferes with PKN1 binding and activation of MAP kinases. Interacts with GNA12. Interacts with IKBKB. Interacts with ESR1, THRA, PPARA and NME2. Interacts (via the C-terminal domain after the PH domain) with MEF2C and RXRB. Interacts (via the C-terminal domain after the PH domain) with PRKD1. Detected in embryonic heart, limb bud, first branchial arch and forebrain (at protein level). Detected in heart. Detected in perichondrium, but not in the bone growth plate.

The protein localises to the cytoplasm. It localises to the cytosol. It is found in the cell cortex. Its subcellular location is the cytoskeleton. The protein resides in the nucleus. The protein localises to the membrane. Functionally, scaffold protein that plays an important role in assembling signaling complexes downstream of several types of G protein-coupled receptors. Activates RHOA in response to signaling via G protein-coupled receptors via its function as Rho guanine nucleotide exchange factor. May also activate other Rho family members. Part of a kinase signaling complex that links ADRA1A and ADRA1B adrenergic receptor signaling to the activation of downstream p38 MAP kinases, such as MAPK11 and MAPK14. Part of a signaling complex that links ADRA1B signaling to the activation of RHOA and IKBKB/IKKB, leading to increased NF-kappa-B transcriptional activity. Part of a RHOA-dependent signaling cascade that mediates responses to lysophosphatidic acid (LPA), a signaling molecule that activates G-protein coupled receptors and potentiates transcriptional activation of the glucocorticoid receptor NR3C1. Part of a signaling cascade that stimulates MEF2C-dependent gene expression in response to lysophosphatidic acid (LPA). Part of a signaling pathway that activates MAPK11 and/or MAPK14 and leads to increased transcription activation of the estrogen receptors ESR1 and ESR2. Part of a signaling cascade that links cAMP and EGFR signaling to BRAF signaling and to PKA-mediated phosphorylation of KSR1, leading to the activation of downstream MAP kinases, such as MAPK1 or MAPK3. Functions as a scaffold protein that anchors cAMP-dependent protein kinase (PKA) and PRKD1. This promotes activation of PRKD1, leading to increased phosphorylation of HDAC5 and ultimately cardiomyocyte hypertrophy. Has no guanine nucleotide exchange activity on CDC42, Ras or Rac. Required for normal embryonic heart development, and in particular for normal sarcomere formation in the developing cardiomyocytes. Plays a role in cardiomyocyte growth and cardiac hypertrophy in response to activation of the beta-adrenergic receptor by phenylephrine or isoproterenol. Required for normal adaptive cardiac hypertrophy in response to pressure overload. Plays a role in osteogenesis. In Mus musculus (Mouse), this protein is A-kinase anchor protein 13.